The sequence spans 110 residues: Chloride intracellular channel protein 1 (110 aa).

A2 bears the N-acetylalanine mark. The interval 2–90 (AEEQPQVELF…EEFLEAVLCP (89 aa)) is required for insertion into the membrane. N6-acetyllysine is present on K13. The G-site signature appears at 24–27 (CPFS). C24 and C59 form a disulfide bridge. The chain crosses the membrane as a helical span at residues 26–46 (FSQRLFMVLWLKGVTFNVTTV).

The protein belongs to the chloride channel CLIC family. Monomer. Homodimer (in vitro). Interacts with TRAPPC2. Dimerization requires a conformation change that leads to the exposure of a large hydrophobic surface. In vivo, this may lead to membrane insertion.

The protein resides in the nucleus. Its subcellular location is the nucleus membrane. It localises to the cytoplasm. It is found in the cell membrane. The protein localises to the endoplasmic reticulum. The catalysed reaction is L-dehydroascorbate + 2 glutathione = glutathione disulfide + L-ascorbate. It carries out the reaction chloride(in) = chloride(out). It catalyses the reaction iodide(out) = iodide(in). The enzyme catalyses thiocyanate(in) = thiocyanate(out). The catalysed reaction is nitrate(in) = nitrate(out). It carries out the reaction bromide(in) = bromide(out). It catalyses the reaction fluoride(in) = fluoride(out). In the soluble state, catalyzes glutaredoxin-like thiol disulfide exchange reactions with reduced glutathione as electron donor. Reduces selenite and dehydroascorbate and may act as an antioxidant during oxidative stress response. Can insert into membranes and form voltage-dependent multi-ion conductive channels. Membrane insertion seems to be redox-regulated and may occur only under oxidizing conditions. Involved in regulation of the cell cycle. This Sus scrofa (Pig) protein is Chloride intracellular channel protein 1 (CLIC1).